A 344-amino-acid chain; its full sequence is Dihydroorotase (344 aa).

Positions 13 and 15 each coordinate Zn(2+). Residues 15–17 and N41 each bind substrate; that span reads HFR. Residues K98, H135, and H173 each contribute to the Zn(2+) site. K98 carries the N6-carboxylysine modification. H135 lines the substrate pocket. L218 serves as a coordination point for substrate. D246 contributes to the Zn(2+) binding site. D246 is a catalytic residue. Substrate contacts are provided by H250 and A262.

The protein belongs to the metallo-dependent hydrolases superfamily. DHOase family. Class II DHOase subfamily. As to quaternary structure, homodimer. Requires Zn(2+) as cofactor.

It catalyses the reaction (S)-dihydroorotate + H2O = N-carbamoyl-L-aspartate + H(+). It functions in the pathway pyrimidine metabolism; UMP biosynthesis via de novo pathway; (S)-dihydroorotate from bicarbonate: step 3/3. Its function is as follows. Catalyzes the reversible cyclization of carbamoyl aspartate to dihydroorotate. The sequence is that of Dihydroorotase from Pseudoalteromonas atlantica (strain T6c / ATCC BAA-1087).